A 442-amino-acid polypeptide reads, in one-letter code: Asparagine--tRNA ligase (442 aa).

It belongs to the class-II aminoacyl-tRNA synthetase family. Homodimer.

It localises to the cytoplasm. It catalyses the reaction tRNA(Asn) + L-asparagine + ATP = L-asparaginyl-tRNA(Asn) + AMP + diphosphate + H(+). The sequence is that of Asparagine--tRNA ligase from Koribacter versatilis (strain Ellin345).